The sequence spans 239 residues: Ribosomal RNA small subunit methyltransferase G (239 aa).

S-adenosyl-L-methionine is bound by residues Gly77, Phe82, 128–129 (AE), and Arg146. Positions 215–239 (DKKRQTPKKYPRKPGTPNKTPLLEK) are disordered.

The protein belongs to the methyltransferase superfamily. RNA methyltransferase RsmG family.

It localises to the cytoplasm. Functionally, specifically methylates the N7 position of guanine in position 535 of 16S rRNA. This chain is Ribosomal RNA small subunit methyltransferase G, found in Staphylococcus aureus (strain bovine RF122 / ET3-1).